A 209-amino-acid polypeptide reads, in one-letter code: Response regulator protein VraR (209 aa).

The Response regulatory domain occupies 4–120 (KVLFVDDHEM…DIADAVRKTS (117 aa)). Aspartate 55 carries the 4-aspartylphosphate modification. An HTH luxR-type domain is found at 141 to 206 (RAELYEMLTE…QAVIYAFQHN (66 aa)). A DNA-binding region (H-T-H motif) is located at residues 165-184 (NQEIASASHITIKTVKTHVS).

In terms of assembly, homodimer. In terms of processing, phosphorylated by VraS. Phosphorylation state of VraR controls dimerization of the protein.

Functionally, member of the two-component regulatory system VraS/VraR involved in the control of the cell wall peptidoglycan biosynthesis. Upon cellular stress, the histidine kinase VraS transfers the phosphoryl group onto VraR. Upon phosphorylation, VraR dimerizes at the N-terminal domain. In turn, phosphorylation-induced dimerization expand and enhance the VraR binding to its own promoter leading to increased expression and subsequent modulation of as many as 40 genes, which ultimately constitute the S.aureus response to cell wall damage. In addition, inhibits the host autophagic flux and delays the early stage of autophagosome formation, thereby promoting bacterial survival. Facilitates the ability of S.aureus to resist host polymorphonuclear leukocytes-mediated phagocytosis and killing thus contributing to immune evasion. The protein is Response regulator protein VraR (vraR) of Staphylococcus aureus (strain NCTC 8325 / PS 47).